Here is a 262-residue protein sequence, read N- to C-terminus: Protein CUSTOS (262 aa).

Disordered stretches follow at residues 1-79 (MAAP…LQTT) and 126-262 (FTSV…IPAN). Residues 9-18 (SDSESSNSSS) show a composition bias toward low complexity. Positions 51 to 61 (ANSQLSTSQPS) are enriched in polar residues. A Phosphoserine modification is found at Ser-61. Phosphothreonine is present on Thr-79. Residue Ser-138 is modified to Phosphoserine. Thr-182 is subject to Phosphothreonine. Positions 188–199 (KKKRKLKKKAKK) are enriched in basic residues. Positions 200–209 (VASVDSAVAA) are enriched in low complexity. A compositionally biased stretch (polar residues) spans 210–221 (TTPTSMATVQKQ). The residue at position 211 (Thr-211) is a Phosphothreonine. The Nucleolar localization signal (NLS) motif lies at 236 to 241 (KKKKKA).

It belongs to the CUSTOS family.

It is found in the nucleus envelope. Its function is as follows. Plays a role in the regulation of Wnt signaling pathway during early development. This chain is Protein CUSTOS, found in Homo sapiens (Human).